A 227-amino-acid polypeptide reads, in one-letter code: Uracil-DNA glycosylase 2 (227 aa).

The active-site Proton acceptor is the Asp67.

The protein belongs to the uracil-DNA glycosylase (UDG) superfamily. UNG family.

The protein localises to the cytoplasm. It catalyses the reaction Hydrolyzes single-stranded DNA or mismatched double-stranded DNA and polynucleotides, releasing free uracil.. In terms of biological role, excises uracil residues from the DNA which can arise as a result of misincorporation of dUMP residues by DNA polymerase or due to deamination of cytosine. The sequence is that of Uracil-DNA glycosylase 2 (ung2) from Streptomyces avermitilis (strain ATCC 31267 / DSM 46492 / JCM 5070 / NBRC 14893 / NCIMB 12804 / NRRL 8165 / MA-4680).